A 255-amino-acid chain; its full sequence is Putative transcription factor D5 (255 aa).

Putative transcription factor required for the expression of viral late genes. In Escherichia coli (Enterobacteria phage T5), this protein is Putative transcription factor D5.